Consider the following 113-residue polypeptide: Ribulose bisphosphate carboxylase small subunit (113 aa).

Belongs to the RuBisCO small chain family. In terms of assembly, heterohexadecamer of 8 large and 8 small subunits.

The protein localises to the carboxysome. In terms of biological role, ruBisCO catalyzes two reactions: the carboxylation of D-ribulose 1,5-bisphosphate, the primary event in carbon dioxide fixation, as well as the oxidative fragmentation of the pentose substrate in the photorespiration process. Both reactions occur simultaneously and in competition at the same active site. Although the small subunit is not catalytic it is essential for maximal activity. The polypeptide is Ribulose bisphosphate carboxylase small subunit (Synechococcus sp. (strain WH7803)).